Here is a 117-residue protein sequence, read N- to C-terminus: Immunoglobulin heavy variable 3-11 (117 aa).

The first 19 residues, 1-19 (MEFGLSWVFLVAIIKGVQC), serve as a signal peptide directing secretion. Glutamine 20 bears the Pyrrolidone carboxylic acid mark. Residues 20–44 (QVQLVESGGGLVKPGGSLRLSCAAS) are framework-1. In terms of domain architecture, Ig-like spans 20-117 (QVQLVESGGG…EDTAVYYCAR (98 aa)). A disulfide bridge connects residues cysteine 41 and cysteine 115. The complementarity-determining-1 stretch occupies residues 45–52 (GFTFSDYY). Positions 53-69 (MSWIRQAPGKGLEWVSY) are framework-2. Residues 70-77 (ISSSSSYT) form a complementarity-determining-2 region. The framework-3 stretch occupies residues 78–115 (NYADSVKGRFTISRDNAKNSLYLQMNSLRAEDTAVYYC). Residues 116-117 (AR) form a complementarity-determining-3 region.

In terms of assembly, immunoglobulins are composed of two identical heavy chains and two identical light chains; disulfide-linked.

The protein resides in the secreted. The protein localises to the cell membrane. Functionally, v region of the variable domain of immunoglobulin heavy chains that participates in the antigen recognition. Immunoglobulins, also known as antibodies, are membrane-bound or secreted glycoproteins produced by B lymphocytes. In the recognition phase of humoral immunity, the membrane-bound immunoglobulins serve as receptors which, upon binding of a specific antigen, trigger the clonal expansion and differentiation of B lymphocytes into immunoglobulins-secreting plasma cells. Secreted immunoglobulins mediate the effector phase of humoral immunity, which results in the elimination of bound antigens. The antigen binding site is formed by the variable domain of one heavy chain, together with that of its associated light chain. Thus, each immunoglobulin has two antigen binding sites with remarkable affinity for a particular antigen. The variable domains are assembled by a process called V-(D)-J rearrangement and can then be subjected to somatic hypermutations which, after exposure to antigen and selection, allow affinity maturation for a particular antigen. The polypeptide is Immunoglobulin heavy variable 3-11 (Homo sapiens (Human)).